A 480-amino-acid chain; its full sequence is Phenylalanine--tRNA ligase alpha subunit (480 aa).

L-phenylalanine-binding residues include T324 and F407. Residue E409 participates in Mg(2+) binding. F432 provides a ligand contact to L-phenylalanine.

The protein belongs to the class-II aminoacyl-tRNA synthetase family. Phe-tRNA synthetase alpha subunit type 2 subfamily. Tetramer of two alpha and two beta subunits. It depends on Mg(2+) as a cofactor.

The protein resides in the cytoplasm. It carries out the reaction tRNA(Phe) + L-phenylalanine + ATP = L-phenylalanyl-tRNA(Phe) + AMP + diphosphate + H(+). The polypeptide is Phenylalanine--tRNA ligase alpha subunit (Methanocaldococcus jannaschii (strain ATCC 43067 / DSM 2661 / JAL-1 / JCM 10045 / NBRC 100440) (Methanococcus jannaschii)).